Consider the following 358-residue polypeptide: Peptide chain release factor 1 (358 aa).

Q233 is modified (N5-methylglutamine). Residues 282-306 (QRAASERSADRRGQVGSGDRSERVR) are compositionally biased toward basic and acidic residues. The interval 282 to 308 (QRAASERSADRRGQVGSGDRSERVRTY) is disordered.

Belongs to the prokaryotic/mitochondrial release factor family. Post-translationally, methylated by PrmC. Methylation increases the termination efficiency of RF1.

The protein resides in the cytoplasm. Functionally, peptide chain release factor 1 directs the termination of translation in response to the peptide chain termination codons UAG and UAA. This chain is Peptide chain release factor 1, found in Afipia carboxidovorans (strain ATCC 49405 / DSM 1227 / KCTC 32145 / OM5) (Oligotropha carboxidovorans).